The chain runs to 305 residues: Beta-carotene 3-hydroxylase, chloroplastic (305 aa).

The transit peptide at 1 to 41 directs the protein to the chloroplast; the sequence is MAFAMSSSLTLFQYQSFGKKPFFSRRRDFAGCSMMNPLVAR. 2 helical membrane passes run 98–118 and 129–149; these read YLVA…AAVY and AVPL…AVGM. Residues 146–272 enclose the Fatty acid hydroxylase domain; the sequence is AVGMEYWARW…KFNGVPYGLF (127 aa). The Histidine box-1 signature appears at 157–162; the sequence is HRALWH. Positions 169-173 match the Histidine box-2 motif; the sequence is HESHH. 2 consecutive transmembrane segments (helical) span residues 184–204 and 207–227; these read DVFA…GFFH and FFSG…MAYM. A Histidine box-3 motif is present at residues 230–235; it reads HDGLVH. The Histidine box-4 signature appears at 256–260; that stretch reads HQIHH.

It belongs to the sterol desaturase family. In terms of assembly, homodimer. In terms of tissue distribution, expressed in flower buds and lips. Detected in roots and leaves.

Its subcellular location is the plastid. The protein resides in the chloroplast membrane. The enzyme catalyses all-trans-beta-carotene + 4 reduced [2Fe-2S]-[ferredoxin] + 2 O2 + 4 H(+) = all-trans-zeaxanthin + 4 oxidized [2Fe-2S]-[ferredoxin] + 2 H2O. Nonheme diiron monooxygenase involved in the biosynthesis of xanthophylls. Specific for beta-ring hydroxylations of beta-carotene. Uses ferredoxin as an electron donor. The protein is Beta-carotene 3-hydroxylase, chloroplastic (BHY) of Oncidium hybrid cultivar (Orchid).